The chain runs to 218 residues: Glutathione S-transferase Mu 1 (218 aa).

One can recognise a GST N-terminal domain in the interval 2–88; sequence PMILGYWDIR…YIARKHNLCG (87 aa). 7–8 contacts glutathione; sequence YW. Thr34 is subject to Phosphothreonine. Glutathione contacts are provided by residues 43–46, Lys50, 59–60, and 72–73; these read RSQW, NL, and QS. Residues 90–208 form the GST C-terminal domain; that stretch reads TEEEKIRVDI…KSSRFLPRPV (119 aa). Tyr116 contacts substrate. Ser210 bears the Phosphoserine mark.

The protein belongs to the GST superfamily. Mu family. In terms of assembly, homodimer. In terms of tissue distribution, liver (at protein level).

The protein localises to the cytoplasm. It catalyses the reaction RX + glutathione = an S-substituted glutathione + a halide anion + H(+). It carries out the reaction prostaglandin A2 + glutathione = prostaglandin A2-S-(R)-glutathione. The catalysed reaction is prostaglandin J2 + glutathione = prostaglandin J2-S-(R)-glutathione. The enzyme catalyses prostaglandin J2 + glutathione = prostaglandin J2-S-(S)-glutathione. It catalyses the reaction prostaglandin A2 + glutathione = prostaglandin A2-S-(S)-glutathione. It carries out the reaction 11(S)-hydroxy-14(S),15(S)-epoxy-(5Z,8Z,12E)-eicosatrienoate + glutathione = (11S,15S)-dihydroxy-14(R)-S-glutathionyl-(5Z,8Z,12E)-eicosatrienoate. Its function is as follows. Conjugation of reduced glutathione to a wide number of exogenous and endogenous hydrophobic electrophiles. Involved in the formation of glutathione conjugates of both prostaglandin A2 (PGA2) and prostaglandin J2 (PGJ2). Participates in the formation of novel hepoxilin regioisomers. This chain is Glutathione S-transferase Mu 1, found in Homo sapiens (Human).